Here is a 512-residue protein sequence, read N- to C-terminus: mRNA export factor (512 aa).

A compositionally biased stretch (low complexity) spans 1 to 15 (MATDIDMLIDLGLDL). The tract at residues 1–243 (MATDIDMLID…APERKAPAAD (243 aa)) is disordered. The short motif at 5 to 17 (IDMLIDLGLDLSD) is the Nuclear export signal element. Residues S16 and S18 each carry the phosphoserine; by host modification. 2 stretches are compositionally biased toward acidic residues: residues 16–26 (SDSDLDEDPPE) and 35–51 (LESDSSGECSSSDEDME). The interval 104-112 (VWSRLGARR) is interaction with host ALYREF. Residues 110-138 (ARRPSCSPEQHGGKVARLQPPPTKAQPAR) carry the Nuclear localization signal motif. S114 carries the phosphoserine; by host modification. R138 carries the post-translational modification Dimethylated arginine; by host. The interval 138-152 (RGGRRGRRRGRGRGG) is RGG-box. Positions 139–149 (GGRRGRRRGRG) are enriched in basic residues. R148 carries the post-translational modification Omega-N-methylarginine; by host. R150 is modified (dimethylated arginine; by host). Pro residues predominate over residues 214 to 233 (APPPLMTLAIAPPPADPRAP). 4 residues coordinate Zn(2+): C400, H479, C483, and C488. Residues 400–488 (CYLKARGLCG…HRQECSSRVC (89 aa)) form a CHC2-type zinc finger. An important for homodimerization region spans residues 500–512 (YVHGKYFYCNSLF).

Belongs to the HHV-1 ICP27 protein family. Homodimer. Interacts with host RBP1; this interaction facilitates the RNA polymerase recruitment to viral transcription sites. Interacts (via the RGG box) with host ALYREF/THOC4; this interaction recruits ALYREF to viral replication compartments and probably directs viral mRNA to the TAP/NFX1 pathway. Interacts with host ALYREF2. Interacts (via the RGG box) with host SRPK1; this interaction relocalizes SRPK1 to the nucleus and seems to alter its activity. Interacts with ICP4; this interaction modulates ICP4 DNA-binding activity. Interacts with host NXF1; this interaction allows efficient export of HHV-1 early and late transcripts. Methylated within the RGG box possibly by host PRMT1. When hypomethylated, ICP27 is exported to the cytoplasm earlier and more rapidly. In terms of processing, phosphorylated.

The protein localises to the host cytoplasm. It is found in the host nucleus. Its function is as follows. Multifunctional regulator of the expression of viral genes that contributes to the shutoff of host protein synthesis and mediates nuclear export of viral intronless mRNAs. Early in infection, this immediate early (EI) protein mediates the inhibition of cellular splicing. This results in the accumulation of unprocessed 3'end pre-mRNAs which can't be exported from the nucleus. Cellular protein synthesis is thereby shut off early after virus infection. Later in the infection, it helps recruit cellular RNA polymerase II to viral replication sites and promotes the nuclear export of viral intronless mRNAs by interacting with mRNAs and host NXF1/TAP. ICP27 binds to NUP62 which may provide facilitated viral mRNA export and may indirectly compete with some host cell transport receptors for binding and inhibit cellular nucleocytoplasmic transport pathways. Also stimulates translation of viral transcripts. Repression of host gene expression blocks the cell cycle at the G1 phase and prevents apoptosis. Seems to silence the 3' splice site of the promyelocytic leukemia (PML) intron 7a, thereby switching PML isoforms from PML-II to PML-V. This could be linked to the accelerated mRNA export induced by ICP27 which might not provide sufficient time for PML pre-mRNA to be spliced in the nucleus. This is mRNA export factor from Homo sapiens (Human).